Consider the following 339-residue polypeptide: Probable G-protein coupled receptor 33 (339 aa).

At 1-30 the chain is on the extracellular side; it reads MDRVNSSGHVISVSPSLTNSTGVPTPAPKA. N-linked (GlcNAc...) asparagine glycosylation is found at N5 and N19. The helical transmembrane segment at 31–53 threads the bilayer; that stretch reads IIAAALFMSFIVGTISNGLYLWM. The Cytoplasmic portion of the chain corresponds to 54 to 64; sequence LKFKMQRTVNT. The helical transmembrane segment at 65–86 threads the bilayer; that stretch reads LLFFHLILSYFISTLILPFMAT. Residues 87–103 are Extracellular-facing; the sequence is SFLQDNHWAFGSVLCKV. C101 and C179 are joined by a disulfide. A helical membrane pass occupies residues 104–124; the sequence is FNSTLSVSMFASVFFLSAISV. Over 125–143 the chain is Cytoplasmic; it reads DRYHLTLHPVWSQQHRTPR. A helical membrane pass occupies residues 144–165; that stretch reads WASRIALRIWILATILSIPYLV. The Extracellular portion of the chain corresponds to 166–209; sequence FRETHDDHKGRIKCQNNYIVGTNWESSEHQTLGQWIHAACFGRR. Residues 210-230 form a helical membrane-spanning segment; sequence FLLGFLLPFLVIVFCYKRVAT. The Cytoplasmic portion of the chain corresponds to 231-246; sequence KMKDKGLFKSSKPFKV. The chain crosses the membrane as a helical span at residues 247 to 268; the sequence is MLTAVVSFFVCWMPYHVHSGLV. Residues 269-283 are Extracellular-facing; the sequence is LTKSQPLPSQLTLGL. The helical transmembrane segment at 284 to 303 threads the bilayer; it reads AVVTISFNTVVSPILYLFTG. Over 304 to 339 the chain is Cytoplasmic; the sequence is ENFEVFKKSILALFKSTFSDSSATERTQTLNSETEI.

This sequence belongs to the G-protein coupled receptor 1 family.

Its subcellular location is the cell membrane. Its function is as follows. Orphan receptor; could be a chemoattractant receptor. This chain is Probable G-protein coupled receptor 33 (Gpr33), found in Rattus rattus (Black rat).